The following is a 49-amino-acid chain: DNA-directed RNA polymerase subunit Rpo12 (49 aa).

The Zn(2+) site is built by Cys11, Cys27, and Cys30.

It belongs to the archaeal Rpo12/eukaryotic RPC10 RNA polymerase subunit family. As to quaternary structure, part of the RNA polymerase complex. The cofactor is Zn(2+).

Its subcellular location is the cytoplasm. The catalysed reaction is RNA(n) + a ribonucleoside 5'-triphosphate = RNA(n+1) + diphosphate. Its function is as follows. DNA-dependent RNA polymerase (RNAP) catalyzes the transcription of DNA into RNA using the four ribonucleoside triphosphates as substrates. This is DNA-directed RNA polymerase subunit Rpo12 from Pyrococcus furiosus (strain ATCC 43587 / DSM 3638 / JCM 8422 / Vc1).